A 64-amino-acid polypeptide reads, in one-letter code: Ferredoxin-2 (64 aa).

Residues 2–29 (RIHVDQDKCCGAGSCVLAAPDVFDQREE) enclose the 4Fe-4S ferredoxin-type domain. Cys10, Cys16, and Cys55 together coordinate [3Fe-4S] cluster.

[3Fe-4S] cluster is required as a cofactor.

Functionally, electron transport protein for the cytochrome P-450-SU2 system. The sequence is that of Ferredoxin-2 (subB) from Streptomyces griseolus.